The chain runs to 172 residues: Large ribosomal subunit protein uL10 (172 aa).

This sequence belongs to the universal ribosomal protein uL10 family. Part of the ribosomal stalk of the 50S ribosomal subunit. The N-terminus interacts with L11 and the large rRNA to form the base of the stalk. The C-terminus forms an elongated spine to which L12 dimers bind in a sequential fashion forming a multimeric L10(L12)X complex.

Its function is as follows. Forms part of the ribosomal stalk, playing a central role in the interaction of the ribosome with GTP-bound translation factors. The protein is Large ribosomal subunit protein uL10 of Francisella tularensis subsp. tularensis (strain FSC 198).